A 283-amino-acid polypeptide reads, in one-letter code: 4-diphosphocytidyl-2-C-methyl-D-erythritol kinase (283 aa).

K10 is an active-site residue. 95-105 (PVAAGLGGGSS) contributes to the ATP binding site. D137 is a catalytic residue.

This sequence belongs to the GHMP kinase family. IspE subfamily.

It carries out the reaction 4-CDP-2-C-methyl-D-erythritol + ATP = 4-CDP-2-C-methyl-D-erythritol 2-phosphate + ADP + H(+). It participates in isoprenoid biosynthesis; isopentenyl diphosphate biosynthesis via DXP pathway; isopentenyl diphosphate from 1-deoxy-D-xylulose 5-phosphate: step 3/6. Its function is as follows. Catalyzes the phosphorylation of the position 2 hydroxy group of 4-diphosphocytidyl-2C-methyl-D-erythritol. The protein is 4-diphosphocytidyl-2-C-methyl-D-erythritol kinase of Pediococcus pentosaceus (strain ATCC 25745 / CCUG 21536 / LMG 10740 / 183-1w).